The chain runs to 126 residues: Larval cuticle protein 2 (126 aa).

A signal peptide spans 1-16 (MFKFVMILAVVGVATA). The Chitin-binding type R&amp;R domain occupies 39–100 (ADGFDSSLHT…PSGAWIPTPP (62 aa)).

Component of the larval cuticle. The chain is Larval cuticle protein 2 (Lcp2) from Drosophila melanogaster (Fruit fly).